Consider the following 119-residue polypeptide: Small ribosomal subunit protein uS10 (119 aa).

An N-acetylalanine modification is found at Ala2. Lys4 participates in a covalent cross-link: Glycyl lysine isopeptide (Lys-Gly) (interchain with G-Cter in ubiquitin). Lys8 bears the N6-succinyllysine; alternate mark. Lys8 is covalently cross-linked (Glycyl lysine isopeptide (Lys-Gly) (interchain with G-Cter in ubiquitin); alternate). Thr9 is modified (phosphothreonine). An N6-acetyllysine mark is found at Lys34 and Lys75. At Ser93 the chain carries Phosphoserine.

The protein belongs to the universal ribosomal protein uS10 family. Component of the 40S small ribosomal subunit. In terms of processing, polyubiquitinated by ZNF598 via 'Lys-63'-linked ubiquitin chains when a ribosome has stalled, initiating the ribosome quality control (RQC) pathway to degrade the potentially detrimental aberrant nascent polypeptide. Deubiquitinated by OTUD3 and USP21, antagonizing ZNF598 activity. Post-translationally, ufmylated by UFL1.

The protein resides in the cytoplasm. In terms of biological role, component of the small ribosomal subunit. The ribosome is a large ribonucleoprotein complex responsible for the synthesis of proteins in the cell. The sequence is that of Small ribosomal subunit protein uS10 (RPS20) from Pongo abelii (Sumatran orangutan).